The following is a 419-amino-acid chain: Tetraspanning orphan receptor (419 aa).

Topologically, residues 1 to 28 (MPRAPALLTNDARHQFTCCLCLHVRTGT) are cytoplasmic. Residues 29-49 (IIFGITQIIIQLVFISFLFLM) form a helical membrane-spanning segment. At 50-165 (TFNPRLIPED…EVKIKHFSPY (116 aa)) the chain is on the extracellular side. Residues 166–186 (IAVCVTTFSLAFCCFMVHGAI) traverse the membrane as a helical segment. The Cytoplasmic portion of the chain corresponds to 187 to 193 (TKQPTHL). The chain crosses the membrane as a helical span at residues 194–214 (LPFFFIQVFDLIICLIHILGF). Over 215 to 240 (MSSTSDLRLMIHTKTGPIYIKSTGFT) the chain is Extracellular. The chain crosses the membrane as a helical span at residues 241-261 (FIILSISCMMLAFKAYCLGMV). Topologically, residues 262–419 (WDCYKYLMLN…SAPSNAHSSC (158 aa)) are cytoplasmic. Positions 303-316 (NNSIGNSGSPNEPN) are enriched in low complexity. Positions 303–328 (NNSIGNSGSPNEPNTRPRPEPITYDP) are disordered.

Interacts (via N-terminal extracellular domain) with human C2a. Phosphorylated on tyrosine residues.

The protein localises to the cell membrane. In terms of biological role, cell surface receptor that binds to human complement C2a protein. This results in inhibition of the classical and lectin pathways of complement activation, probably due to interference with binding of C2a to C4b and interference with cleavage by C1 or MASP2 such that C3 convertase cannot be formed. This infers resistance to complement-mediated cell lysis, allowing parasite survival and infection. The polypeptide is Tetraspanning orphan receptor (Schistosoma mansoni (Blood fluke)).